The following is a 474-amino-acid chain: tRNA modification GTPase MnmE (474 aa).

3 residues coordinate (6S)-5-formyl-5,6,7,8-tetrahydrofolate: arginine 28, glutamate 92, and arginine 131. In terms of domain architecture, TrmE-type G spans 227–395 (GIPVAIVGTT…LKGELTQIME (169 aa)). Residue asparagine 237 participates in K(+) binding. GTP is bound by residues 237–242 (NVGKST), 256–262 (SDIHGTT), 281–284 (DTAG), and 376–378 (SAR). Serine 241 lines the Mg(2+) pocket. 3 residues coordinate K(+): serine 256, isoleucine 258, and threonine 261. Threonine 262 is a binding site for Mg(2+). Lysine 474 provides a ligand contact to (6S)-5-formyl-5,6,7,8-tetrahydrofolate.

The protein belongs to the TRAFAC class TrmE-Era-EngA-EngB-Septin-like GTPase superfamily. TrmE GTPase family. In terms of assembly, homodimer. Heterotetramer of two MnmE and two MnmG subunits. It depends on K(+) as a cofactor.

It localises to the cytoplasm. Functionally, exhibits a very high intrinsic GTPase hydrolysis rate. Involved in the addition of a carboxymethylaminomethyl (cmnm) group at the wobble position (U34) of certain tRNAs, forming tRNA-cmnm(5)s(2)U34. This chain is tRNA modification GTPase MnmE, found in Porphyromonas gingivalis (strain ATCC BAA-308 / W83).